The following is a 1067-amino-acid chain: TBC1 domain family member 31 (1067 aa).

6 WD repeats span residues 36–75, 76–119, 120–161, 162–201, 202–249, and 250–288; these read GKVV…FRLV, LKTG…SWMR, GHEG…KLNI, RQSV…CKYQ, LPLP…RVIQ, and MPSQ…RFIN. A Rab-GAP TBC domain is found at 419-594; that stretch reads EYPAKYRMFV…RLFDNIFSNH (176 aa). Positions 724 to 773 form a coiled coil; it reads QQELLQKAEEQRKHVLEQEEEKLTQQRAKLAAMKRELKVKELQLLDATRR. 2 stretches are compositionally biased toward basic and acidic residues: residues 896-912 and 926-937; these read KADA…EELQ and MREEAHRKKDEA. Disordered regions lie at residues 896 to 955 and 1045 to 1067; these read KADA…HSDG and AARA…PVSP. Composition is skewed to polar residues over residues 941-953 and 1052-1067; these read IQES…STHS and SSAS…PVSP.

Its subcellular location is the cytoplasm. It is found in the cytoskeleton. It localises to the microtubule organizing center. The protein localises to the centrosome. The protein resides in the centriolar satellite. Its subcellular location is the cilium basal body. Its function is as follows. Molecular adapter which is involved in cilium biogenesis. Part of a functional complex including OFD1 a centriolar protein involved in cilium assembly. Could regulate the cAMP-dependent phosphorylation of OFD1, and its subsequent ubiquitination by PJA2 which ultimately leads to its proteasomal degradation. The polypeptide is TBC1 domain family member 31 (Oryzias latipes (Japanese rice fish)).